Consider the following 505-residue polypeptide: Formate--tetrahydrofolate ligase (505 aa).

This sequence belongs to the formate--tetrahydrofolate ligase family.

The catalysed reaction is (6S)-5,6,7,8-tetrahydrofolate + formate + ATP = (6R)-10-formyltetrahydrofolate + ADP + phosphate. The protein operates within one-carbon metabolism; tetrahydrofolate interconversion. This Bifidobacterium longum (strain NCC 2705) protein is Formate--tetrahydrofolate ligase (fhs).